We begin with the raw amino-acid sequence, 85 residues long: Large ribosomal subunit protein bL27 (85 aa).

The tract at residues 1 to 21 is disordered; that stretch reads MAHKKGGGSTKNGRDSNPKYL.

It belongs to the bacterial ribosomal protein bL27 family.

The sequence is that of Large ribosomal subunit protein bL27 from Chlorobium chlorochromatii (strain CaD3).